The following is a 156-amino-acid chain: MRAVIQRVKKASVKVNGELISQISQGLLIFLGISKKDKEEDIKILADKIADLRIFSDENGKMNLSIKEVNGDILVVSQFTLFADCRRGKRPDFTDAADKEKALDYYKKFVAYLKNKSEKVEEGIFQAYMEVELINDGPVTIILDTEDLKKPRRRKE.

Residues 137–138 (GP) carry the Gly-cisPro motif, important for rejection of L-amino acids motif.

The protein belongs to the DTD family. As to quaternary structure, homodimer.

It localises to the cytoplasm. It carries out the reaction glycyl-tRNA(Ala) + H2O = tRNA(Ala) + glycine + H(+). The catalysed reaction is a D-aminoacyl-tRNA + H2O = a tRNA + a D-alpha-amino acid + H(+). Functionally, an aminoacyl-tRNA editing enzyme that deacylates mischarged D-aminoacyl-tRNAs. Also deacylates mischarged glycyl-tRNA(Ala), protecting cells against glycine mischarging by AlaRS. Acts via tRNA-based rather than protein-based catalysis; rejects L-amino acids rather than detecting D-amino acids in the active site. By recycling D-aminoacyl-tRNA to D-amino acids and free tRNA molecules, this enzyme counteracts the toxicity associated with the formation of D-aminoacyl-tRNA entities in vivo and helps enforce protein L-homochirality. The sequence is that of D-aminoacyl-tRNA deacylase from Dictyoglomus turgidum (strain DSM 6724 / Z-1310).